The following is a 302-amino-acid chain: Haloalkane dehalogenase (302 aa).

The AB hydrolase-1 domain maps to 48-152 (PILLMHGEPS…VVVSNTGLPI (105 aa)). The Nucleophile role is filled by Asp123. Asp249 (proton donor) is an active-site residue. The active-site Proton acceptor is His278.

The protein belongs to the haloalkane dehalogenase family. Type 1 subfamily. In terms of assembly, monomer.

The enzyme catalyses 1-haloalkane + H2O = a halide anion + a primary alcohol + H(+). Catalyzes hydrolytic cleavage of carbon-halogen bonds in halogenated aliphatic compounds, leading to the formation of the corresponding primary alcohols, halide ions and protons. In Caulobacter vibrioides (strain ATCC 19089 / CIP 103742 / CB 15) (Caulobacter crescentus), this protein is Haloalkane dehalogenase.